The chain runs to 138 residues: MTQMTVQVVTPDGIKYDHHAKFISVTTPDGEMGILPNHINVIAPLQVHEMKIRRVSEDDRVDWVAINGGIIEIKDNVVTIVADSAERDRDIDVSRAERAKLRAERDIAEAETTHDINEVQRAKVALRRALNRINVSKK.

This sequence belongs to the ATPase epsilon chain family. As to quaternary structure, F-type ATPases have 2 components, CF(1) - the catalytic core - and CF(0) - the membrane proton channel. CF(1) has five subunits: alpha(3), beta(3), gamma(1), delta(1), epsilon(1). CF(0) has three main subunits: a, b and c.

It is found in the cell membrane. Produces ATP from ADP in the presence of a proton gradient across the membrane. The sequence is that of ATP synthase epsilon chain from Streptococcus equi subsp. zooepidemicus (strain H70).